Consider the following 132-residue polypeptide: Small ribosomal subunit protein uS12 (132 aa).

3-methylthioaspartic acid is present on D89. The segment at 106 to 132 (GVKDRKKSRSKYGTKKPKEAAKTAAKK) is disordered. The segment covering 109–120 (DRKKSRSKYGTK) has biased composition (basic residues).

This sequence belongs to the universal ribosomal protein uS12 family. Part of the 30S ribosomal subunit. Contacts proteins S8 and S17. May interact with IF1 in the 30S initiation complex.

With S4 and S5 plays an important role in translational accuracy. Its function is as follows. Interacts with and stabilizes bases of the 16S rRNA that are involved in tRNA selection in the A site and with the mRNA backbone. Located at the interface of the 30S and 50S subunits, it traverses the body of the 30S subunit contacting proteins on the other side and probably holding the rRNA structure together. The combined cluster of proteins S8, S12 and S17 appears to hold together the shoulder and platform of the 30S subunit. The sequence is that of Small ribosomal subunit protein uS12 (rpsL) from Thermus thermophilus (strain ATCC BAA-163 / DSM 7039 / HB27).